Here is a 110-residue protein sequence, read N- to C-terminus: UPF0060 membrane protein Haur_1798 (110 aa).

4 consecutive transmembrane segments (helical) span residues Val-7–Trp-27, Ser-33–Leu-53, Val-63–Asp-83, and Gln-89–Pro-109.

The protein belongs to the UPF0060 family.

The protein localises to the cell membrane. In Herpetosiphon aurantiacus (strain ATCC 23779 / DSM 785 / 114-95), this protein is UPF0060 membrane protein Haur_1798.